The following is a 215-amino-acid chain: LexA repressor (215 aa).

The H-T-H motif DNA-binding region spans 28–48 (RAEIAAELGFSSPNAAEEHLR). Active-site for autocatalytic cleavage activity residues include S133 and K170.

Belongs to the peptidase S24 family. As to quaternary structure, homodimer.

It carries out the reaction Hydrolysis of Ala-|-Gly bond in repressor LexA.. In terms of biological role, represses a number of genes involved in the response to DNA damage (SOS response), including recA and lexA. In the presence of single-stranded DNA, RecA interacts with LexA causing an autocatalytic cleavage which disrupts the DNA-binding part of LexA, leading to derepression of the SOS regulon and eventually DNA repair. In Burkholderia ambifaria (strain ATCC BAA-244 / DSM 16087 / CCUG 44356 / LMG 19182 / AMMD) (Burkholderia cepacia (strain AMMD)), this protein is LexA repressor.